We begin with the raw amino-acid sequence, 83 residues long: Mitochondrial import inner membrane translocase subunit Tim8 B (83 aa).

Ala-2 is subject to N-acetylalanine. Residues 36 to 59 (CWDKCVEKPGSRLDSRTENCLSSC) carry the Twin CX3C motif motif. 2 disulfides stabilise this stretch: Cys-36–Cys-59 and Cys-40–Cys-55.

This sequence belongs to the small Tim family. Heterohexamer; possibly composed of 3 copies of TIMM8B and 3 copies of TIMM13, named soluble 70 kDa complex. Associates with the TIM22 complex, whose core is composed of TIMM22.

Its subcellular location is the mitochondrion inner membrane. Functionally, probable mitochondrial intermembrane chaperone that participates in the import and insertion of some multi-pass transmembrane proteins into the mitochondrial inner membrane. Also required for the transfer of beta-barrel precursors from the TOM complex to the sorting and assembly machinery (SAM complex) of the outer membrane. Acts as a chaperone-like protein that protects the hydrophobic precursors from aggregation and guide them through the mitochondrial intermembrane space. The protein is Mitochondrial import inner membrane translocase subunit Tim8 B (Timm8b) of Mus musculus (Mouse).